The sequence spans 315 residues: Malate dehydrogenase (315 aa).

9–15 (GGSGNVG) lines the NAD(+) pocket. R84 and R90 together coordinate substrate. Residues N97 and 120–122 (VSN) contribute to the NAD(+) site. Residues N122 and R153 each contribute to the substrate site. Residue H177 is the Proton acceptor of the active site.

It belongs to the LDH/MDH superfamily.

It carries out the reaction (S)-malate + NAD(+) = oxaloacetate + NADH + H(+). Catalyzes the reversible oxidation of malate to oxaloacetate. The protein is Malate dehydrogenase of Helicobacter hepaticus (strain ATCC 51449 / 3B1).